A 114-amino-acid polypeptide reads, in one-letter code: Large ribosomal subunit protein uL22 (114 aa).

The protein belongs to the universal ribosomal protein uL22 family. Part of the 50S ribosomal subunit.

Its function is as follows. This protein binds specifically to 23S rRNA; its binding is stimulated by other ribosomal proteins, e.g. L4, L17, and L20. It is important during the early stages of 50S assembly. It makes multiple contacts with different domains of the 23S rRNA in the assembled 50S subunit and ribosome. The globular domain of the protein is located near the polypeptide exit tunnel on the outside of the subunit, while an extended beta-hairpin is found that lines the wall of the exit tunnel in the center of the 70S ribosome. This Streptococcus gordonii (strain Challis / ATCC 35105 / BCRC 15272 / CH1 / DL1 / V288) protein is Large ribosomal subunit protein uL22.